The sequence spans 387 residues: 3-ketoacyl-CoA thiolase (387 aa).

Residue Cys-91 is the Acyl-thioester intermediate of the active site. Catalysis depends on proton acceptor residues His-343 and Cys-373.

It belongs to the thiolase-like superfamily. Thiolase family. In terms of assembly, heterotetramer of two alpha chains (FadB) and two beta chains (FadA).

It localises to the cytoplasm. It carries out the reaction an acyl-CoA + acetyl-CoA = a 3-oxoacyl-CoA + CoA. The protein operates within lipid metabolism; fatty acid beta-oxidation. Its function is as follows. Catalyzes the final step of fatty acid oxidation in which acetyl-CoA is released and the CoA ester of a fatty acid two carbons shorter is formed. The polypeptide is 3-ketoacyl-CoA thiolase (Shewanella frigidimarina (strain NCIMB 400)).